A 325-amino-acid chain; its full sequence is Beta-ketoacyl-[acyl-carrier-protein] synthase III (325 aa).

Residues Cys116 and His252 contribute to the active site. Residues 253-257 (QANLR) are ACP-binding. Asn282 is a catalytic residue.

This sequence belongs to the thiolase-like superfamily. FabH family. Homodimer.

It is found in the cytoplasm. It catalyses the reaction malonyl-[ACP] + acetyl-CoA + H(+) = 3-oxobutanoyl-[ACP] + CO2 + CoA. It participates in lipid metabolism; fatty acid biosynthesis. In terms of biological role, catalyzes the condensation reaction of fatty acid synthesis by the addition to an acyl acceptor of two carbons from malonyl-ACP. Catalyzes the first condensation reaction which initiates fatty acid synthesis and may therefore play a role in governing the total rate of fatty acid production. Possesses both acetoacetyl-ACP synthase and acetyl transacylase activities. Its substrate specificity determines the biosynthesis of branched-chain and/or straight-chain of fatty acids. In Xanthomonas campestris pv. campestris (strain ATCC 33913 / DSM 3586 / NCPPB 528 / LMG 568 / P 25), this protein is Beta-ketoacyl-[acyl-carrier-protein] synthase III.